The chain runs to 448 residues: Keratin, type I cytoskeletal 27 (448 aa).

Positions 1–73 are head; that stretch reads MSVRFSSASR…ANEHGLLSGN (73 aa). The segment at 74 to 109 is coil 1A; that stretch reads EKVTMQNLNDRLASYLENVQALEEANADLEQKIKDW. The IF rod domain maps to 74–389; the sequence is EKVTMQNLND…RLIDGDEGSC (316 aa). Residues 110 to 131 are linker 1; it reads YEKFGPGSCRGLDHDYSRYFPI. Positions 132–223 are coil 1B; sequence IDDLRTQIIS…KNHEEEMQAL (92 aa). Positions 224–246 are linker 12; the sequence is QCAAGGNVNVEMNAAPGVDLTVL. The coil 2 stretch occupies residues 247-385; sequence LNNMRAEYEA…ETYCRLIDGD (139 aa). Residues 386–448 are tail; it reads EGSCVKAKGQ…VNKTEQRIPS (63 aa). The disordered stretch occupies residues 427–448; the sequence is SRVHTLEEKSTKVNKTEQRIPS. Residues 430 to 448 show a composition bias toward basic and acidic residues; sequence HTLEEKSTKVNKTEQRIPS.

This sequence belongs to the intermediate filament family. In terms of assembly, heterotetramer of two type I and two type II keratins. Interacts with KRT6A to form filaments. In terms of tissue distribution, expressed in skin. Expressed in the Henle layer and cuticle of the irs in hair follicle bulb. In the hair follicle, expression was observed in all layers of the irs but was stronger in the Henle layer and cuticle than the Huxley layer until the Henle layer differentiated (at protein level).

The protein resides in the cytoplasm. Functionally, essential for the proper assembly of type I and type II keratin protein complexes and formation of keratin intermediate filaments in the inner root sheath (irs). The chain is Keratin, type I cytoskeletal 27 from Mus musculus (Mouse).